We begin with the raw amino-acid sequence, 473 residues long: MNLALVLGTNVVRKAYRFLFISRKFCNGNFGGNEIDNGFPDLDCGFDEDSNISELRSIDREVISVRSRFLESANHSASRVLVTLQLDESGFNSKSVLDELNVRVSGLLVREVLVGILRNLSYDNKARCAKLAYRFFLWSGEQECFRHTVNSYHLLMKIFAECGEYKAMWRLVDEMVQDGFPTTARTFNLLICSCGEAGLAKQAVVQFMKSKTFNYRPFKHSYNAILNSLLGVKQYKLIEWVYKQMLEDGFSPDVLTYNILLWTNYRLGKMDRFDRLFDEMARDGFSPDSYTYNILLHILGKGNKPLAALTTLNHMKEVGIDPSVLHYTTLIDGLSRAGNLEACKYFLDEMVKAGCRPDVVCYTVMITGYVVSGELDKAKEMFREMTVKGQLPNVFTYNSMIRGLCMAGEFREACWLLKEMESRGCNPNFVVYSTLVSYLRKAGKLSEARKVIREMVKKGHYVHLVPKMMKYRR.

PPR repeat units lie at residues 148–182, 183–217, 218–252, 253–287, 288–322, 323–357, 358–392, 393–427, and 428–462; these read TVNS…GFPT, TART…NYRP, FKHS…GFSP, DVLT…GFSP, DSYT…GIDP, SVLH…GCRP, DVVC…GQLP, NVFT…GCNP, and NFVV…GHYV.

It belongs to the PPR family. P subfamily.

The sequence is that of Pentatricopeptide repeat-containing protein At3g60050 from Arabidopsis thaliana (Mouse-ear cress).